The sequence spans 128 residues: Large ribosomal subunit protein bL12 (128 aa).

This sequence belongs to the bacterial ribosomal protein bL12 family. Homodimer. Part of the ribosomal stalk of the 50S ribosomal subunit. Forms a multimeric L10(L12)X complex, where L10 forms an elongated spine to which 2 to 4 L12 dimers bind in a sequential fashion. Binds GTP-bound translation factors.

Functionally, forms part of the ribosomal stalk which helps the ribosome interact with GTP-bound translation factors. Is thus essential for accurate translation. The polypeptide is Large ribosomal subunit protein bL12 (Sorangium cellulosum (strain So ce56) (Polyangium cellulosum (strain So ce56))).